The primary structure comprises 383 residues: ATP phosphoribosyltransferase regulatory subunit (383 aa).

Belongs to the class-II aminoacyl-tRNA synthetase family. HisZ subfamily. In terms of assembly, heteromultimer composed of HisG and HisZ subunits.

It localises to the cytoplasm. The protein operates within amino-acid biosynthesis; L-histidine biosynthesis; L-histidine from 5-phospho-alpha-D-ribose 1-diphosphate: step 1/9. Required for the first step of histidine biosynthesis. May allow the feedback regulation of ATP phosphoribosyltransferase activity by histidine. This is ATP phosphoribosyltransferase regulatory subunit from Paraburkholderia phymatum (strain DSM 17167 / CIP 108236 / LMG 21445 / STM815) (Burkholderia phymatum).